Here is a 164-residue protein sequence, read N- to C-terminus: UPF0114 protein BCI_0033 (164 aa).

3 helical membrane-spanning segments follow: residues 15–35 (LLFP…LKFF), 53–73 (LILI…LVMV), and 136–156 (IMWC…MAYI).

It belongs to the UPF0114 family.

Its subcellular location is the cell membrane. This is UPF0114 protein BCI_0033 from Baumannia cicadellinicola subsp. Homalodisca coagulata.